We begin with the raw amino-acid sequence, 245 residues long: Eukaryotic translation initiation factor 6 (245 aa).

The protein belongs to the eIF-6 family. As to quaternary structure, monomer. Associates with the 60S ribosomal subunit.

The protein localises to the cytoplasm. The protein resides in the nucleus. Its subcellular location is the nucleolus. Functionally, binds to the 60S ribosomal subunit and prevents its association with the 40S ribosomal subunit to form the 80S initiation complex in the cytoplasm. May also be involved in ribosome biogenesis. This chain is Eukaryotic translation initiation factor 6 (eif6), found in Xenopus laevis (African clawed frog).